A 451-amino-acid chain; its full sequence is Probable gamma-glutamyl phosphate reductase (451 aa).

This sequence belongs to the gamma-glutamyl phosphate reductase family.

The catalysed reaction is L-glutamate 5-semialdehyde + phosphate + NADP(+) = L-glutamyl 5-phosphate + NADPH + H(+). Its pathway is amino-acid biosynthesis; L-proline biosynthesis; L-glutamate 5-semialdehyde from L-glutamate: step 2/2. Functionally, catalyzes the NADPH dependent reduction of L-gamma-glutamyl 5-phosphate into L-glutamate 5-semialdehyde and phosphate. The product spontaneously undergoes cyclization to form 1-pyrroline-5-carboxylate. The polypeptide is Probable gamma-glutamyl phosphate reductase (pro1) (Schizosaccharomyces pombe (strain 972 / ATCC 24843) (Fission yeast)).